The chain runs to 540 residues: Chaperonin GroEL 3 (540 aa).

Residues 30–33 (TLGP), Lys51, 87–91 (DGTTT), Gly415, 479–481 (NAA), and Asp495 each bind ATP.

Belongs to the chaperonin (HSP60) family. Forms a cylinder of 14 subunits composed of two heptameric rings stacked back-to-back. Interacts with the co-chaperonin GroES.

The protein resides in the cytoplasm. It catalyses the reaction ATP + H2O + a folded polypeptide = ADP + phosphate + an unfolded polypeptide.. Functionally, together with its co-chaperonin GroES, plays an essential role in assisting protein folding. The GroEL-GroES system forms a nano-cage that allows encapsulation of the non-native substrate proteins and provides a physical environment optimized to promote and accelerate protein folding. This is Chaperonin GroEL 3 from Burkholderia ambifaria (strain ATCC BAA-244 / DSM 16087 / CCUG 44356 / LMG 19182 / AMMD) (Burkholderia cepacia (strain AMMD)).